A 450-amino-acid chain; its full sequence is Probable galactarate/D-glucarate transporter GudP (450 aa).

Over 1 to 20 the chain is Cytoplasmic; it reads MSSLSQAASSVEKRTNARYW. A helical transmembrane segment spans residues 21 to 41; the sequence is IVVMLFIVTSFNYGDRATLSI. At 42 to 58 the chain is on the periplasmic side; sequence AGSEMAKDIGLDPVGMG. The chain crosses the membrane as a helical span at residues 59 to 79; sequence YVFSAFSWAYVIGQIPGGWLL. Over 80 to 85 the chain is Cytoplasmic; that stretch reads DRFGSK. Residues 86–105 form a helical membrane-spanning segment; sequence RVYFWSIFIWSMFTLLQGFV. Residues 106 to 109 lie on the Periplasmic side of the membrane; the sequence is DIFS. The chain crosses the membrane as a helical span at residues 110–132; sequence GFGIIVALFTLRFLVGLAEAPSF. Residues 133-153 are Cytoplasmic-facing; the sequence is PGNSRIVAAWFPAQERGTAVS. The helical transmembrane segment at 154–174 threads the bilayer; sequence IFNSAQYFATVIFAPIMGWLT. The Periplasmic segment spans residues 175–176; sequence HE. A helical membrane pass occupies residues 177–197; sequence VGWSHVFFFMGGLGIVISFIW. Residues 198 to 254 are Cytoplasmic-facing; sequence LKVIHEPNQHPGVNKKELEYIAAGGALINMDQQNTKVKVPFSVKWGQIKQLLGSRMM. A helical membrane pass occupies residues 255 to 275; the sequence is IGVYIGQYCINALTYFFITWF. Residues 276–290 lie on the Periplasmic side of the membrane; that stretch reads PVYLVQARGMSILKA. The helical transmembrane segment at 291–311 threads the bilayer; the sequence is GFVASVPAVCGFIGGVLGGII. The Cytoplasmic portion of the chain corresponds to 312–329; the sequence is SDWLMRRTGSLNIARKTP. The helical transmembrane segment at 330 to 350 threads the bilayer; sequence IVMGMLLSMVMVFCNYVNVEW. Position 351 (Met351) is a topological domain, periplasmic. Residues 352–372 traverse the membrane as a helical segment; the sequence is IIGFMALAFFGKGIGALGWAV. The Cytoplasmic segment spans residues 373–387; sequence MADTAPKEISGLSGG. A helical transmembrane segment spans residues 388–408; it reads LFNMFGNISGIVTPIAIGYIV. The Periplasmic segment spans residues 409–415; sequence GTTGSFN. A helical membrane pass occupies residues 416 to 436; the sequence is GALIYVGVHALIAVLSYLVLV. Over 437–450 the chain is Cytoplasmic; the sequence is GDIKRIELKPVAGQ.

It belongs to the major facilitator superfamily. Phthalate permease family.

The protein localises to the cell inner membrane. The catalysed reaction is galactarate(in) + H(+)(in) = galactarate(out) + H(+)(out). It carries out the reaction D-glucarate(in) + H(+)(in) = D-glucarate(out) + H(+)(out). The enzyme catalyses (R)-glycerate(in) + H(+)(in) = (R)-glycerate(out) + H(+)(out). Its function is as follows. Probably involved in the uptake of galactarate and/or D-glucarate. May also transport D-glycerate. This chain is Probable galactarate/D-glucarate transporter GudP, found in Escherichia coli (strain K12).